A 2060-amino-acid polypeptide reads, in one-letter code: Unconventional myosin-X (2060 aa).

N-acetylmethionine is present on M1. The region spanning 63–739 (EGVDDMASLT…LEQKLEKRRE (677 aa)) is the Myosin motor domain. ATP contacts are provided by residues N104, Y113, 160–165 (GAGKTE), and N215. Residues 619–641 (LHSLMATLSSSNPFFVRCIKPNT) are actin-binding. 3 consecutive IQ domains span residues 742–771 (IDRA…GVVT), 765–794 (VLCG…AAIV), and 788–817 (LKKA…EKRE). Residues 814 to 882 (EKRELEERKR…LTRELEKQRE (69 aa)) form an SAH region. A coiled-coil region spans residues 883–933 (NKQVEEILRLEKEIEDLQRMKEQQELSLTEASLQKLQQLRDEELRRLEDEA). A phosphoserine mark is found at S961, S964, and S967. Disordered regions lie at residues 971–1039 (SELA…PYMN) and 1064–1088 (SLHN…PSPD). The segment covering 991-1005 (PEEEVDEGFEADDDA) has biased composition (acidic residues). The span at 1064–1083 (SLHNSSSGESTYCMPQNNGD) shows a compositional bias: polar residues. Position 1160 is a phosphothreonine (T1160). PH domains are found at residues 1214–1312 (EALK…QVHS) and 1394–1499 (EFIV…NVTD). The MyTH4 domain occupies 1549-1697 (LPYGDINLNL…PSRDEIEALI (149 aa)). Residues 1702–2046 (MTSTVYCHGG…AYISMIVKKR (345 aa)) form the FERM domain.

This sequence belongs to the TRAFAC class myosin-kinesin ATPase superfamily. Myosin family. In terms of assembly, monomer, when in an inactive conformation in the cytosol. Homodimer in its active, membrane-bound conformation; antiparallel coiled coil-mediated dimer formation. Interacts with ECPAS. Interacts with DCC and ITGB5; the presence of DCC inhibits ITGB5 binding. Interacts with tubulin; ITGB5 or DCC binding inhibits tubulin binding. Interacts strongly with CALM3 and weakly with CALM, the CALM3 interaction is essential for function in filopodial extension and motility. Interacts with ITGB1, ITGB3 and ITGB5. Interacts with NEO1. Interacts with VASP.

It localises to the cytoplasm. Its subcellular location is the cytosol. The protein localises to the cell projection. It is found in the lamellipodium. The protein resides in the ruffle. It localises to the cytoskeleton. Its subcellular location is the filopodium tip. The protein localises to the cell cortex. It is found in the filopodium membrane. The protein resides in the cell membrane. In terms of biological role, myosins are actin-based motor molecules with ATPase activity. Unconventional myosins serve in intracellular movements. MYO10 binds to actin filaments and actin bundles and functions as a plus end-directed motor. Moves with higher velocity and takes larger steps on actin bundles than on single actin filaments. The tail domain binds to membranous compartments containing phosphatidylinositol 3,4,5-trisphosphate or integrins, and mediates cargo transport along actin filaments. Regulates cell shape, cell spreading and cell adhesion. Stimulates the formation and elongation of filopodia. In hippocampal neurons it induces the formation of dendritic filopodia by trafficking the actin-remodeling protein VASP to the tips of filopodia, where it promotes actin elongation. Plays a role in formation of the podosome belt in osteoclasts. This chain is Unconventional myosin-X (Myo10), found in Rattus norvegicus (Rat).